We begin with the raw amino-acid sequence, 910 residues long: p53-induced death domain-containing protein 1 (910 aa).

A disordered region spans residues 1–25; sequence MAATVEGPELEAAAAAGDASEDSDA. The residue at position 2 (Ala-2) is an N-acetylalanine. LRR repeat units follow at residues 126–147, 149–171, 172–194, 195–216, 218–240, 241–263, and 264–285; these read HLAH…VLQM, GLGA…GALP, ALTF…GALS, TLQR…IGGL, SLLE…AGLR, SLRL…ARLP, and LLTR…LLDA. Ser-299 and Ser-305 each carry phosphoserine. ZU5 domains lie at 322–454 and 455–596; these read DLDS…VSRP and VSNA…WYTT. Peptidase S68 stretches follow at residues 423–452 and 566–594; these read DLET…LVVS and DITA…WLWY. Catalysis depends on residues His-444, Ser-446, His-586, and Ser-588. Positions 580–716 are UPA domain; that stretch reads ARFQVTHFSW…TTTLDREAQA (137 aa). The 86-residue stretch at 788 to 873 folds into the Death domain; the sequence is TQSNLLSVAG…DVAEEVRAVL (86 aa). The disordered stretch occupies residues 884-910; sequence IRRMGLAPKDPALPGSSAPQPPEPAQA.

As to quaternary structure, forms a complex named the PIDDosome with CASP2 and CRADD. Forms a complex with IKBKG and RIPK1. Interacts with FADD and MADD. Post-translationally, undergoes autoproteolytic processing whose extent either directs cells towards survival or apoptotic pathways. Autoproteolytically cleaved into two main fragments PIDD-N and PIDD-C. PIDD-C can be further processed into PIDD-CC, a processing which is enhanced by DNA damage. The cleavage producing PIDD-C is required for translocation of PIDD1 to the nucleus upon DNA damage and activation of NF-kappa-B. PIDD-CC mediates the interaction with CRADD and the cleavage producing PIDD-CC is required for the activation of CASP2. PIDD-N remains associated with PIDD-C and PIDD-CC after cleavage. As to expression, ubiquitous.

The protein localises to the cytoplasm. It localises to the nucleus. Component of the DNA damage/stress response pathway that functions downstream of p53/TP53 and can either promote cell survival or apoptosis. Associated with CRADD and the CASP2 caspase, it forms the PIDDosome a complex that activates CASP2 and triggers apoptosis. Associated with IKBKG and RIPK1, it enhances sumoylation and ubiquitination of IKBKG which is important for activation of the transcription factor NF-kappa-B. The protein is p53-induced death domain-containing protein 1 of Homo sapiens (Human).